The following is a 91-amino-acid chain: CRISPR-associated endoribonuclease Cas2 2 (91 aa).

Aspartate 6 is a Mg(2+) binding site.

This sequence belongs to the CRISPR-associated endoribonuclease Cas2 protein family. In terms of assembly, homodimer, forms a heterotetramer with a Cas1 homodimer. Requires Mg(2+) as cofactor.

CRISPR (clustered regularly interspaced short palindromic repeat), is an adaptive immune system that provides protection against mobile genetic elements (viruses, transposable elements and conjugative plasmids). CRISPR clusters contain sequences complementary to antecedent mobile elements and target invading nucleic acids. CRISPR clusters are transcribed and processed into CRISPR RNA (crRNA). Functions as a ssRNA-specific endoribonuclease. Involved in the integration of spacer DNA into the CRISPR cassette. This chain is CRISPR-associated endoribonuclease Cas2 2, found in Moorella thermoacetica (strain ATCC 39073 / JCM 9320).